The following is a 173-amino-acid chain: HTH-type transcriptional regulator IscR (173 aa).

In terms of domain architecture, HTH rrf2-type spans 2-131 (KLTSKGRYAV…NDITLGELMK (130 aa)). The H-T-H motif DNA-binding region spans 28 to 51 (LADISERQGISLSYLEQLFSKLRK). Positions 92, 98, and 104 each coordinate [2Fe-2S] cluster.

[2Fe-2S] cluster serves as cofactor.

Functionally, regulates the transcription of several operons and genes involved in the biogenesis of Fe-S clusters and Fe-S-containing proteins. The chain is HTH-type transcriptional regulator IscR from Vibrio atlanticus (strain LGP32) (Vibrio splendidus (strain Mel32)).